The primary structure comprises 275 residues: Arylamine N-acetyltransferase (275 aa).

Cys70 serves as the catalytic Acyl-thioester intermediate. Catalysis depends on residues His110 and Asp127.

It belongs to the arylamine N-acetyltransferase family. Homodimer and homotetramer.

The catalysed reaction is an arylamine + acetyl-CoA = an N-acetylarylamine + CoA. In terms of biological role, catalyzes the transfer of the acetyl group from acetyl coenzyme A to the free amino group of arylamines and hydrazines. Substrates include isoniazid, anisidine, and 4-aminoveratrole, and to a much lesser extent, p-aminobenzoic acid. In Mycolicibacterium smegmatis (Mycobacterium smegmatis), this protein is Arylamine N-acetyltransferase.